A 479-amino-acid chain; its full sequence is UDP-N-acetylmuramoyl-L-alanyl-D-glutamate--2,6-diaminopimelate ligase (479 aa).

Ser-21 serves as a coordination point for UDP-N-acetyl-alpha-D-muramoyl-L-alanyl-D-glutamate. ATP is bound at residue 98-104; that stretch reads GTNGKSS. UDP-N-acetyl-alpha-D-muramoyl-L-alanyl-D-glutamate contacts are provided by residues 144–145, Ser-171, Gln-177, and Arg-179; that span reads TT. The residue at position 211 (Lys-211) is an N6-carboxylysine. Meso-2,6-diaminopimelate-binding positions include Arg-372, 396–399, Gly-446, and Glu-450; that span reads DNPR. Residues 396 to 399 carry the Meso-diaminopimelate recognition motif motif; that stretch reads DNPR.

Belongs to the MurCDEF family. MurE subfamily. It depends on Mg(2+) as a cofactor. Post-translationally, carboxylation is probably crucial for Mg(2+) binding and, consequently, for the gamma-phosphate positioning of ATP.

Its subcellular location is the cytoplasm. The catalysed reaction is UDP-N-acetyl-alpha-D-muramoyl-L-alanyl-D-glutamate + meso-2,6-diaminopimelate + ATP = UDP-N-acetyl-alpha-D-muramoyl-L-alanyl-gamma-D-glutamyl-meso-2,6-diaminopimelate + ADP + phosphate + H(+). It functions in the pathway cell wall biogenesis; peptidoglycan biosynthesis. In terms of biological role, catalyzes the addition of meso-diaminopimelic acid to the nucleotide precursor UDP-N-acetylmuramoyl-L-alanyl-D-glutamate (UMAG) in the biosynthesis of bacterial cell-wall peptidoglycan. The protein is UDP-N-acetylmuramoyl-L-alanyl-D-glutamate--2,6-diaminopimelate ligase of Rickettsia montanensis.